We begin with the raw amino-acid sequence, 185 residues long: Large ribosomal subunit protein uL5 (185 aa).

It belongs to the universal ribosomal protein uL5 family. In terms of assembly, part of the 50S ribosomal subunit; part of the 5S rRNA/L5/L18/L25 subcomplex. Contacts the 5S rRNA and the P site tRNA. Forms a bridge to the 30S subunit in the 70S ribosome.

Functionally, this is one of the proteins that bind and probably mediate the attachment of the 5S RNA into the large ribosomal subunit, where it forms part of the central protuberance. In the 70S ribosome it contacts protein S13 of the 30S subunit (bridge B1b), connecting the 2 subunits; this bridge is implicated in subunit movement. Contacts the P site tRNA; the 5S rRNA and some of its associated proteins might help stabilize positioning of ribosome-bound tRNAs. This Sinorhizobium medicae (strain WSM419) (Ensifer medicae) protein is Large ribosomal subunit protein uL5.